The following is a 330-amino-acid chain: Ferredoxin--NADP reductase (330 aa).

The FAD site is built by glutamate 35, glutamine 43, tyrosine 48, valine 90, phenylalanine 123, aspartate 285, and threonine 326.

It belongs to the ferredoxin--NADP reductase type 2 family. As to quaternary structure, homodimer. Requires FAD as cofactor.

The enzyme catalyses 2 reduced [2Fe-2S]-[ferredoxin] + NADP(+) + H(+) = 2 oxidized [2Fe-2S]-[ferredoxin] + NADPH. This chain is Ferredoxin--NADP reductase, found in Streptococcus pyogenes serotype M3 (strain ATCC BAA-595 / MGAS315).